We begin with the raw amino-acid sequence, 637 residues long: Choline O-acetyltransferase (637 aa).

The span at 1–13 (MPVSKREQSKDTG) shows a compositional bias: basic and acidic residues. Residues 1–20 (MPVSKREQSKDTGDPCALPK) are disordered. The active-site Proton acceptor is His-329. CoA contacts are provided by residues 407–419 (GKEF…MSPD), Ser-445, and Gln-545.

Belongs to the carnitine/choline acetyltransferase family.

It carries out the reaction choline + acetyl-CoA = acetylcholine + CoA. In terms of biological role, catalyzes the reversible synthesis of acetylcholine (ACh) from acetyl CoA and choline at cholinergic synapses. The protein is Choline O-acetyltransferase (chat) of Danio rerio (Zebrafish).